Here is a 239-residue protein sequence, read N- to C-terminus: Superoxide dismutase 1 copper chaperone (239 aa).

The HMA domain maps to Phe7–Ile70. 2 residues coordinate Cu cation: Cys18 and Cys21. A disulfide bridge connects residues Cys28 and Cys65. Asp163 is a Zn(2+) binding site. Cu cation-binding residues include Cys219 and Cys221.

This sequence belongs to the CCS1 family. Cu(2+) is required as a cofactor.

It is found in the cytoplasm. Functionally, copper chaperone for superoxide dismutase 1 (SOD1). Binds copper ions and delivers them specifically to SOD1. The chain is Superoxide dismutase 1 copper chaperone (CCS1) from Candida glabrata (strain ATCC 2001 / BCRC 20586 / JCM 3761 / NBRC 0622 / NRRL Y-65 / CBS 138) (Yeast).